Consider the following 104-residue polypeptide: Gastrin (104 aa).

Positions 1–21 are cleaved as a signal peptide; that stretch reads MPRLCVCMLVLVLALATFSEA. The propeptide occupies 22–58; the sequence is SWKPRSQLQDASSGPRTNGALEQHQLEKLGPASHHRR. The interval 23-104 is disordered; the sequence is WKPRSQLQDA…RSAEEEDQYN (82 aa). Residues 25–37 show a composition bias toward polar residues; it reads PRSQLQDASSGPR. Tyrosine 87 is subject to Sulfotyrosine. Position 92 is a phenylalanine amide (phenylalanine 92). Serine 96 is modified (phosphoserine). A propeptide spanning residues 96 to 104 is cleaved from the precursor; the sequence is SAEEEDQYN. Tyrosine 103 is subject to Sulfotyrosine.

It belongs to the gastrin/cholecystokinin family. In terms of processing, sulfation on Tyr-87 enhances proteolytic processing, and blocks peptide degradation. Levels of sulfation differ between proteolytically-cleaved gastrins and between tissues.

It is found in the secreted. Functionally, gastrin stimulates the stomach mucosa to produce and secrete hydrochloric acid and the pancreas to secrete its digestive enzymes. It also stimulates smooth muscle contraction and increases blood circulation and water secretion in the stomach and intestine. The sequence is that of Gastrin (Gast) from Rattus norvegicus (Rat).